The chain runs to 221 residues: Large ribosomal subunit protein uL3 (221 aa).

This sequence belongs to the universal ribosomal protein uL3 family. As to quaternary structure, part of the 50S ribosomal subunit. Forms a cluster with proteins L14 and L19.

Its function is as follows. One of the primary rRNA binding proteins, it binds directly near the 3'-end of the 23S rRNA, where it nucleates assembly of the 50S subunit. The protein is Large ribosomal subunit protein uL3 of Nocardia farcinica (strain IFM 10152).